Here is an 882-residue protein sequence, read N- to C-terminus: Translation initiation factor IF-2 (882 aa).

2 disordered regions span residues 67–202 (KTVS…EKAR) and 223–278 (ERYG…KHMK). Composition is skewed to basic and acidic residues over residues 95–152 (VKRD…EAKA) and 161–202 (EQPK…EKAR). Residues 251-264 (GRRNRNKTQTKSKR) show a composition bias toward basic residues. A compositionally biased stretch (basic and acidic residues) spans 265–274 (GGKDAREGRE). One can recognise a tr-type G domain in the interval 382-551 (PRAPVVTIMG…LLQAEVLELK (170 aa)). A G1 region spans residues 391-398 (GHVDHGKT). A GTP-binding site is contributed by 391 to 398 (GHVDHGKT). The G2 stretch occupies residues 416–420 (GITQH). The G3 stretch occupies residues 437–440 (DTPG). GTP is bound by residues 437–441 (DTPGH) and 491–494 (NKMD). Positions 491–494 (NKMD) are G4. Positions 527–529 (SAK) are G5.

This sequence belongs to the TRAFAC class translation factor GTPase superfamily. Classic translation factor GTPase family. IF-2 subfamily.

It localises to the cytoplasm. In terms of biological role, one of the essential components for the initiation of protein synthesis. Protects formylmethionyl-tRNA from spontaneous hydrolysis and promotes its binding to the 30S ribosomal subunits. Also involved in the hydrolysis of GTP during the formation of the 70S ribosomal complex. The sequence is that of Translation initiation factor IF-2 from Shewanella amazonensis (strain ATCC BAA-1098 / SB2B).